A 377-amino-acid polypeptide reads, in one-letter code: Nitric oxide reductase FlRd-NAD(+) reductase (377 aa).

Belongs to the FAD-dependent oxidoreductase family. Requires FAD as cofactor.

Its subcellular location is the cytoplasm. It catalyses the reaction 2 reduced [nitric oxide reductase rubredoxin domain] + NAD(+) + H(+) = 2 oxidized [nitric oxide reductase rubredoxin domain] + NADH. Its pathway is nitrogen metabolism; nitric oxide reduction. Functionally, one of at least two accessory proteins for anaerobic nitric oxide (NO) reductase. Reduces the rubredoxin moiety of NO reductase. In Salmonella agona (strain SL483), this protein is Nitric oxide reductase FlRd-NAD(+) reductase.